Reading from the N-terminus, the 145-residue chain is Small ribosomal subunit protein uS12 (145 aa).

Belongs to the universal ribosomal protein uS12 family. In terms of assembly, component of the small ribosomal subunit. Mature ribosomes consist of a small (40S) and a large (60S) subunit. The 40S subunit contains about 32 different proteins and 1 molecule of RNA (18S). The 60S subunit contains 45 different proteins and 3 molecules of RNA (25S, 5.8S and 5S).

The protein localises to the cytoplasm. Its function is as follows. Component of the ribosome, a large ribonucleoprotein complex responsible for the synthesis of proteins in the cell. The small ribosomal subunit (SSU) binds messenger RNAs (mRNAs) and translates the encoded message by selecting cognate aminoacyl-transfer RNA (tRNA) molecules. The large subunit (LSU) contains the ribosomal catalytic site termed the peptidyl transferase center (PTC), which catalyzes the formation of peptide bonds, thereby polymerizing the amino acids delivered by tRNAs into a polypeptide chain. The nascent polypeptides leave the ribosome through a tunnel in the LSU and interact with protein factors that function in enzymatic processing, targeting, and the membrane insertion of nascent chains at the exit of the ribosomal tunnel. In Candida albicans (strain SC5314 / ATCC MYA-2876) (Yeast), this protein is Small ribosomal subunit protein uS12 (RPS23A).